Here is a 248-residue protein sequence, read N- to C-terminus: Probable transcriptional regulatory protein BRADO1143 (248 aa).

Belongs to the TACO1 family.

Its subcellular location is the cytoplasm. The chain is Probable transcriptional regulatory protein BRADO1143 from Bradyrhizobium sp. (strain ORS 278).